A 177-amino-acid polypeptide reads, in one-letter code: Large ribosomal subunit protein uL6 (177 aa).

The protein belongs to the universal ribosomal protein uL6 family. Part of the 50S ribosomal subunit.

Its function is as follows. This protein binds to the 23S rRNA, and is important in its secondary structure. It is located near the subunit interface in the base of the L7/L12 stalk, and near the tRNA binding site of the peptidyltransferase center. The sequence is that of Large ribosomal subunit protein uL6 from Pectobacterium carotovorum subsp. carotovorum (strain PC1).